We begin with the raw amino-acid sequence, 30 residues long: Brevinin-2PTa (30 aa).

Cys24 and Cys30 are oxidised to a cystine.

As to expression, expressed by the skin glands.

It is found in the secreted. In terms of biological role, has antibacterial activity against the Gram-positive bacterium S.aureus ATCC 25923 (MIC=18 uM) and the Gram-negative bacterium E.coli ATCC 25726 (MIC=18 uM). This Pulchrana picturata (Malaysian fire frog) protein is Brevinin-2PTa.